Here is a 194-residue protein sequence, read N- to C-terminus: 21 kDa hemolysin (194 aa).

The first 19 residues, 1 to 19, serve as a signal peptide directing secretion; that stretch reads MRTRSRSTVRPLWPPPSPA. BON domains are found at residues 49-118 and 127-194; these read DDEV…RTGE and IDSW…NYVQ.

It localises to the periplasm. This is 21 kDa hemolysin (hly) from Actinobacillus pleuropneumoniae (Haemophilus pleuropneumoniae).